A 421-amino-acid polypeptide reads, in one-letter code: Gamma-glutamyl phosphate reductase (421 aa).

Belongs to the gamma-glutamyl phosphate reductase family.

The protein localises to the cytoplasm. It carries out the reaction L-glutamate 5-semialdehyde + phosphate + NADP(+) = L-glutamyl 5-phosphate + NADPH + H(+). It participates in amino-acid biosynthesis; L-proline biosynthesis; L-glutamate 5-semialdehyde from L-glutamate: step 2/2. In terms of biological role, catalyzes the NADPH-dependent reduction of L-glutamate 5-phosphate into L-glutamate 5-semialdehyde and phosphate. The product spontaneously undergoes cyclization to form 1-pyrroline-5-carboxylate. The protein is Gamma-glutamyl phosphate reductase of Ruegeria sp. (strain TM1040) (Silicibacter sp.).